The sequence spans 821 residues: Cell wall integrity transcriptional regulator CAS5 (821 aa).

Disordered stretches follow at residues 42–66 (HLQS…LNQH), 219–245 (FESP…LSTP), 305–432 (TKSN…STSQ), 544–576 (QEEE…TSSL), and 607–750 (VKQE…KHKC). Residues 222 to 245 (PQSHIQSQPSYSQGYHNQNSLSTP) show a composition bias toward polar residues. Positions 305–318 (TKSNSTSSYNSTLN) are enriched in low complexity. Positions 319 to 329 (PFYTPSQQLSS) are enriched in polar residues. Basic residues predominate over residues 372–387 (QLRKAKSYTSLLRKKK). Residues 396 to 412 (QNQQHQQQQQQQQQQQQ) are compositionally biased toward low complexity. Polar residues predominate over residues 422–432 (QNLSFPNSTSQ). Positions 545-561 (EEEQEHQDEQMEIDSFE) are enriched in acidic residues. 2 stretches are compositionally biased toward low complexity: residues 662–674 (LVNK…NNDT) and 684–693 (KNTNGNGNND). Residues 694-714 (NDNDSEENNDNVDDADDDDDG) show a composition bias toward acidic residues. 2 C2H2-type zinc fingers span residues 748–770 (HKCP…LKSH) and 776–801 (FECQ…KKIH). The residue at position 769 (serine 769) is a Phosphoserine.

Post-translationally, phosphorylation at Ser-769 and probably additional serine residues. GLC7 dephosphorylates CAS5 in response to cell wall stress which leads to its translocation to the nucleus.

The protein resides in the nucleus. It localises to the cytoplasm. Functionally, transcription factor that acts with ADA2 to promote cell wall integrity. Regulates the expression of target genes in concert with the transcriptional regulators SWI4 and SWI6. Crucial for proper cell cycle dynamics and responses to echinocandins, which inhibit beta-1,3-glucan synthesis. Has distinct transcriptional targets under basal and stress conditions. Also regulates a transcriptional network that influences the response to fluconazole. Plays a key role in adherence, hyphal development, and virulence. Acts as a repressor of hypha-specific genes during yeast-form growth. The protein is Cell wall integrity transcriptional regulator CAS5 of Candida albicans (strain SC5314 / ATCC MYA-2876) (Yeast).